The primary structure comprises 169 residues: uncharacterized protein (169 aa).

Residues Met-1–Leu-91 constitute a mitochondrion transit peptide. The disordered stretch occupies residues Pro-54–Glu-76. The segment covering Ser-61–Asn-71 has biased composition (polar residues).

The protein resides in the mitochondrion. This is an uncharacterized protein from Trypanosoma brucei brucei (strain 927/4 GUTat10.1).